A 228-amino-acid polypeptide reads, in one-letter code: Eukaryotic translation initiation factor 4E-1 (228 aa).

EIF4G-binding stretches follow at residues 53–56 (HLLE) and 63–99 (FDTP…NNIH). Residues 71-76 (KQDDWG), Lys-103, and 121-122 (WE) contribute to the mRNA site. Cys-126 and Cys-164 are joined by a disulfide. An EIF4G-binding region spans residues 147-156 (YTLLAMIGEQ). MRNA-binding positions include 171 to 176 (RGRAEK) and 216 to 220 (RKLDR).

The protein belongs to the eukaryotic initiation factor 4E family. In terms of assembly, EIF4F is a multi-subunit complex, the composition of which varies with external and internal environmental conditions. It is composed of at least EIF4A, EIF4E and EIF4G. EIF4E is also known to interact with other partners. In higher plants two isoforms of EIF4F have been identified, named isoform EIF4F and isoform EIF(iso)4F. Isoform EIF4F has subunits p220 and p26, whereas isoform EIF(iso)4F has subunits p82 and p28. (Microbial infection) Interacts with potyvirus viral genome-linked protein (VPg); this interaction is possible in susceptible hosts but impaired in resistant plants. In terms of processing, according to the redox status, the Cys-126-Cys-164 disulfide bridge may have a role in regulating protein function by affecting its ability to bind capped mRNA.

Its subcellular location is the nucleus. The protein localises to the cytoplasm. Component of the protein complex eIF4F, which is involved in the recognition of the mRNA cap, ATP-dependent unwinding of 5'-terminal secondary structure and recruitment of mRNA to the ribosome. Recognizes and binds the 7-methylguanosine-containing mRNA cap during an early step in the initiation of protein synthesis and facilitates ribosome binding by inducing the unwinding of the mRNAs secondary structures. Key component of recessive resistance to potyviruses. In terms of biological role, (Microbial infection) Susceptibility host factor required for viral infection by recruiting viral RNAs to the host ribosomal complex via an interaction with viral genome-linked protein (VPg). Also seems to be involved in virus movement from cell-to-cell. This Pisum sativum (Garden pea) protein is Eukaryotic translation initiation factor 4E-1.